The primary structure comprises 963 residues: Non-ribosomal peptide synthetase CmlP (963 aa).

Positions 492 to 568 (GEDAAELRRV…AAFLRHLRGE (77 aa)) constitute a Carrier domain. At Ser526 the chain carries O-(pantetheine 4'-phosphoryl)serine. The segment at 928–963 (GRLLGTPPDTPAGDRPERTGTTAEAQNGAAHAPTPR) is disordered.

This sequence belongs to the ATP-dependent AMP-binding enzyme family. Pantetheine 4'-phosphate serves as cofactor.

The enzyme catalyses 4-amino-L-phenylalanine + holo-[peptidyl-carrier protein] + ATP = 4-amino-L-phenylalanyl-[peptidyl-carrier protein] + AMP + diphosphate. It participates in antibiotic biosynthesis. Involved in chloramphenicol biosynthesis. Activates 4-amino-L-phenylalanine by adenylation and loads it onto its peptidyl carrier domain, via a thioester linkage to the phosphopanthetheine moiety. Can also adenylate tyrosine and phenylalanine at low rates, but not L-p-nitrophenylalanine or threo-phenylserine. This chain is Non-ribosomal peptide synthetase CmlP, found in Streptomyces venezuelae (strain ATCC 10712 / CBS 650.69 / DSM 40230 / JCM 4526 / NBRC 13096 / PD 04745).